The primary structure comprises 497 residues: Lysine--tRNA ligase (497 aa).

2 residues coordinate Mg(2+): glutamate 406 and glutamate 413.

This sequence belongs to the class-II aminoacyl-tRNA synthetase family. In terms of assembly, homodimer. Mg(2+) serves as cofactor.

It localises to the cytoplasm. The catalysed reaction is tRNA(Lys) + L-lysine + ATP = L-lysyl-tRNA(Lys) + AMP + diphosphate. The chain is Lysine--tRNA ligase from Rhizobium leguminosarum bv. trifolii (strain WSM2304).